The following is a 339-amino-acid chain: Serine/threonine-protein kinase SAPK2 (339 aa).

A Protein kinase domain is found at 4-260 (YEVIKDIGSG…IPEIKNHPWF (257 aa)). ATP contacts are provided by residues 10–18 (IGSGNFGVA) and Lys33. The active-site Proton acceptor is Asp123. Residues 253–339 (EIKNHPWFLK…EDSGDFVCAL (87 aa)) form a C-terminal region.

Belongs to the protein kinase superfamily. Ser/Thr protein kinase family. Interacts with BZIP46. Interacts with ABI5 and PP2C30. Interacts with PP2C51. In terms of processing, phosphorylated. In terms of tissue distribution, expressed in leaf blades, leaf sheaths and roots. Expressed in shoots and roots of young seedlings.

The protein resides in the cytoplasm. It localises to the nucleus. The catalysed reaction is L-seryl-[protein] + ATP = O-phospho-L-seryl-[protein] + ADP + H(+). It carries out the reaction L-threonyl-[protein] + ATP = O-phospho-L-threonyl-[protein] + ADP + H(+). Activated by phosphorylation in response to hyperosmotic stress within 5 minutes. In terms of biological role, may play a role in signal transduction of hyperosmotic response. Can phosphorylate BZIP46 in vitro. Together with ABI5, PP2C30 and PYL5, is part of an abscisic acid (ABA) signaling unit that modulates seed germination and early seedling growth. The polypeptide is Serine/threonine-protein kinase SAPK2 (SAPK2) (Oryza sativa subsp. japonica (Rice)).